A 236-amino-acid polypeptide reads, in one-letter code: Leucyl/phenylalanyl-tRNA--protein transferase (236 aa).

This sequence belongs to the L/F-transferase family.

The protein resides in the cytoplasm. It catalyses the reaction N-terminal L-lysyl-[protein] + L-leucyl-tRNA(Leu) = N-terminal L-leucyl-L-lysyl-[protein] + tRNA(Leu) + H(+). It carries out the reaction N-terminal L-arginyl-[protein] + L-leucyl-tRNA(Leu) = N-terminal L-leucyl-L-arginyl-[protein] + tRNA(Leu) + H(+). The enzyme catalyses L-phenylalanyl-tRNA(Phe) + an N-terminal L-alpha-aminoacyl-[protein] = an N-terminal L-phenylalanyl-L-alpha-aminoacyl-[protein] + tRNA(Phe). Functions in the N-end rule pathway of protein degradation where it conjugates Leu, Phe and, less efficiently, Met from aminoacyl-tRNAs to the N-termini of proteins containing an N-terminal arginine or lysine. In Vibrio atlanticus (strain LGP32) (Vibrio splendidus (strain Mel32)), this protein is Leucyl/phenylalanyl-tRNA--protein transferase.